The chain runs to 1033 residues: SIT4-associating protein SAP190 (1033 aa).

Disordered stretches follow at residues 32-82, 147-213, 768-813, and 828-1033; these read DQDD…TTES, PEII…QVET, FGND…HDSG, and ENEE…KEAF. Positions 158–170 are enriched in basic and acidic residues; sequence ILIERDRKDKKED. Positions 171 to 182 are enriched in acidic residues; it reads AEEGGDSEETTN. Residues 183 to 195 show a composition bias toward basic and acidic residues; that stretch reads DSDHDSGDERSVD. A Phosphoserine modification is found at serine 774. Composition is skewed to acidic residues over residues 784 to 793 and 828 to 838; these read SEDIIGDTEG and ENEEDYAEYSD. 3 positions are modified to phosphoserine: serine 857, serine 862, and serine 892. Positions 858–879 are enriched in basic and acidic residues; the sequence is DDGKSKSAESEFTDKISEHRDG. Polar residues predominate over residues 909 to 924; the sequence is SRSQPSDPKLQDQNIF. Acidic residues predominate over residues 932 to 944; that stretch reads GVGDDDDYMDPND. Residue threonine 990 is modified to Phosphothreonine. Position 991 is a phosphoserine (serine 991). A compositionally biased stretch (acidic residues) spans 1000–1018; it reads ISSDEEDSEDEDEENDMGN.

The protein belongs to the SAPS family. In terms of assembly, associates with the SIT4 protein phosphatase catalytic subunit in a cell-cycle-dependent manner. Post-translationally, hyperphosphorylated in the absence of SIT4.

Its subcellular location is the cytoplasm. In terms of biological role, positive regulator of protein phosphatase SIT4. Involved in the general amino acid control (GAAC) response regulated by TOR. Involved in the dephosphorylation of the elongator complex subunit IKI3. This Saccharomyces cerevisiae (strain AWRI1631) (Baker's yeast) protein is SIT4-associating protein SAP190 (SAP190).